Consider the following 375-residue polypeptide: 23S rRNA (uracil(747)-C(5))-methyltransferase RlmC (375 aa).

Residues cysteine 3, cysteine 11, cysteine 14, and cysteine 87 each coordinate [4Fe-4S] cluster. Residues glutamine 212, phenylalanine 241, glutamate 262, and asparagine 307 each contribute to the S-adenosyl-L-methionine site. The Nucleophile role is filled by cysteine 334.

This sequence belongs to the class I-like SAM-binding methyltransferase superfamily. RNA M5U methyltransferase family. RlmC subfamily.

The enzyme catalyses uridine(747) in 23S rRNA + S-adenosyl-L-methionine = 5-methyluridine(747) in 23S rRNA + S-adenosyl-L-homocysteine + H(+). Catalyzes the formation of 5-methyl-uridine at position 747 (m5U747) in 23S rRNA. The polypeptide is 23S rRNA (uracil(747)-C(5))-methyltransferase RlmC (Pectobacterium atrosepticum (strain SCRI 1043 / ATCC BAA-672) (Erwinia carotovora subsp. atroseptica)).